The primary structure comprises 153 residues: Endoribonuclease YbeY (153 aa).

3 residues coordinate Zn(2+): histidine 118, histidine 122, and histidine 128.

The protein belongs to the endoribonuclease YbeY family. It depends on Zn(2+) as a cofactor.

It localises to the cytoplasm. In terms of biological role, single strand-specific metallo-endoribonuclease involved in late-stage 70S ribosome quality control and in maturation of the 3' terminus of the 16S rRNA. This is Endoribonuclease YbeY from Chloroflexus aggregans (strain MD-66 / DSM 9485).